The sequence spans 427 residues: UDP-N-acetylglucosamine 1-carboxyvinyltransferase 1 (427 aa).

Lysine 23 to asparagine 24 provides a ligand contact to phosphoenolpyruvate. Position 96 (arginine 96) interacts with UDP-N-acetyl-alpha-D-glucosamine. Cysteine 120 functions as the Proton donor in the catalytic mechanism. Cysteine 120 is subject to 2-(S-cysteinyl)pyruvic acid O-phosphothioketal. Residues arginine 125–leucine 129, aspartate 309, and valine 331 contribute to the UDP-N-acetyl-alpha-D-glucosamine site.

This sequence belongs to the EPSP synthase family. MurA subfamily.

It is found in the cytoplasm. The enzyme catalyses phosphoenolpyruvate + UDP-N-acetyl-alpha-D-glucosamine = UDP-N-acetyl-3-O-(1-carboxyvinyl)-alpha-D-glucosamine + phosphate. It participates in cell wall biogenesis; peptidoglycan biosynthesis. Its function is as follows. Cell wall formation. Adds enolpyruvyl to UDP-N-acetylglucosamine. The chain is UDP-N-acetylglucosamine 1-carboxyvinyltransferase 1 from Streptococcus pneumoniae serotype 4 (strain ATCC BAA-334 / TIGR4).